Here is a 202-residue protein sequence, read N- to C-terminus: N-acetyltransferase 9-like protein (202 aa).

Residues E34 to L184 enclose the N-acetyltransferase domain.

Belongs to the acetyltransferase family. GNAT subfamily.

The polypeptide is N-acetyltransferase 9-like protein (Caenorhabditis elegans).